The following is a 422-amino-acid chain: Enolase (422 aa).

Glutamine 162 serves as a coordination point for (2R)-2-phosphoglycerate. Glutamate 204 (proton donor) is an active-site residue. Aspartate 241, glutamate 284, and aspartate 311 together coordinate Mg(2+). 4 residues coordinate (2R)-2-phosphoglycerate: lysine 336, arginine 365, serine 366, and lysine 387. The active-site Proton acceptor is the lysine 336.

It belongs to the enolase family. Mg(2+) is required as a cofactor.

The protein resides in the cytoplasm. Its subcellular location is the secreted. The protein localises to the cell surface. The enzyme catalyses (2R)-2-phosphoglycerate = phosphoenolpyruvate + H2O. It participates in carbohydrate degradation; glycolysis; pyruvate from D-glyceraldehyde 3-phosphate: step 4/5. Its function is as follows. Catalyzes the reversible conversion of 2-phosphoglycerate (2-PG) into phosphoenolpyruvate (PEP). It is essential for the degradation of carbohydrates via glycolysis. This Bartonella quintana (strain Toulouse) (Rochalimaea quintana) protein is Enolase.